The chain runs to 365 residues: Protein Wnt-6 (365 aa).

The first 24 residues, 1-24 (MLPPLPSRLGLLLLLLLCPAHVGG), serve as a signal peptide directing secretion. 11 cysteine pairs are disulfide-bonded: Cys-76–Cys-87, Cys-124–Cys-132, Cys-134–Cys-172, Cys-222–Cys-236, Cys-224–Cys-231, Cys-294–Cys-325, Cys-310–Cys-320, Cys-324–Cys-364, Cys-340–Cys-355, Cys-342–Cys-352, and Cys-347–Cys-348. N-linked (GlcNAc...) asparagine glycosylation is present at Asn-86. Residues 140 to 158 (RAPPRPSGLPGTPGPPGPA) show a composition bias toward pro residues. Residues 140 to 164 (RAPPRPSGLPGTPGPPGPAGSPEGS) form a disordered region. The O-palmitoleoyl serine; by PORCN moiety is linked to residue Ser-228. N-linked (GlcNAc...) asparagine glycosylation is present at Asn-311.

Belongs to the Wnt family. Interacts with PORCN. Post-translationally, palmitoleoylation is required for efficient binding to frizzled receptors. Depalmitoleoylation leads to Wnt signaling pathway inhibition. In terms of tissue distribution, expressed in gastric cancer cell lines and gastric cancer tissues (at protein level). Detected in the apical gland region of the gastric foveolar epithelium (at protein level).

The protein resides in the secreted. The protein localises to the extracellular space. Its subcellular location is the extracellular matrix. Its function is as follows. Ligand for members of the frizzled family of seven transmembrane receptors. Probable developmental protein. May be a signaling molecule which affects the development of discrete regions of tissues. Is likely to signal over only few cell diameters. Together with CAV1 may promote chemoresistance of gastric cancer cells to DNA-damaging anthracycline drugs through the activation of the canonical Wnt receptor signaling pathway. This is Protein Wnt-6 (WNT6) from Homo sapiens (Human).